Reading from the N-terminus, the 396-residue chain is Nitrate regulatory protein (396 aa).

Residues 37–284 enclose the NIT domain; that stretch reads GQISALVHML…VDLLNAADAL (248 aa). One can recognise an ANTAR domain in the interval 323–384; sequence LQQLSGQLAS…RMVEIARALL (62 aa).

Its function is as follows. Nitrate- and nitrite-responsive positive regulator for nasFEDCBA operon expression. NasR protein binds to the factor-independent terminator site located in the nasF operon leader RNA to effect transcription antitermination. The sequence is that of Nitrate regulatory protein (nasR) from Klebsiella oxytoca.